The primary structure comprises 102 residues: uncharacterized protein (102 aa).

Transmembrane regions (helical) follow at residues 21 to 43 (FSSS…TPVF) and 58 to 80 (SFAV…YFFC).

It localises to the membrane. This is an uncharacterized protein from Saccharomyces cerevisiae (strain ATCC 204508 / S288c) (Baker's yeast).